A 91-amino-acid polypeptide reads, in one-letter code: DNA-binding protein HRL18 (91 aa).

Belongs to the bacterial histone-like protein family.

In terms of biological role, histone-like DNA-binding protein which is capable of wrapping DNA to stabilize it, and thus to prevent its denaturation under extreme environmental conditions. The polypeptide is DNA-binding protein HRL18 (Rhizobium leguminosarum).